Reading from the N-terminus, the 626-residue chain is DNA-directed RNA polymerase subunit gamma (626 aa).

Cys71, Cys73, Cys86, and Cys89 together coordinate Zn(2+). The Mg(2+) site is built by Asp467, Asp469, and Asp471.

This sequence belongs to the RNA polymerase beta' chain family. RpoC1 subfamily. In cyanobacteria the RNAP catalytic core is composed of 2 alpha, 1 beta, 1 beta', 1 gamma and 1 omega subunit. When a sigma factor is associated with the core the holoenzyme is formed, which can initiate transcription. Mg(2+) serves as cofactor. The cofactor is Zn(2+).

It carries out the reaction RNA(n) + a ribonucleoside 5'-triphosphate = RNA(n+1) + diphosphate. Its function is as follows. DNA-dependent RNA polymerase catalyzes the transcription of DNA into RNA using the four ribonucleoside triphosphates as substrates. The polypeptide is DNA-directed RNA polymerase subunit gamma (Microcystis aeruginosa (strain NIES-843 / IAM M-2473)).